Here is a 291-residue protein sequence, read N- to C-terminus: HTH-type transcriptional activator AmpR (291 aa).

The 58-residue stretch at 6–63 (IPLNSLRAFEAAARHLSFTRAAIELNVTHSAISQHVKSLEQQLNCQLFVRGSRGLMLT) folds into the HTH lysR-type domain. The segment at residues 23-42 (FTRAAIELNVTHSAISQHVK) is a DNA-binding region (H-T-H motif).

Belongs to the LysR transcriptional regulatory family.

The protein resides in the cytoplasm. Regulates the expression of the beta-lactamase gene. Represses cephalosporinase (AmpC) in the presence of beta-lactams and induces it in the absence of them. In Citrobacter freundii, this protein is HTH-type transcriptional activator AmpR (ampR).